Reading from the N-terminus, the 956-residue chain is Matrilin-2 (956 aa).

The N-terminal stretch at 1–23 (MEKMLVGCLLMLGQLFLVLPVDG) is a signal peptide. The region spanning 57 to 232 (DLVFIIDSSR…SQIESLTSVF (176 aa)) is the VWFA 1 domain. Asn-221 is a glycosylation site (N-linked (GlcNAc...) asparagine). EGF-like domains lie at 238 to 278 (TVHM…KTCR), 279 to 319 (IQDL…KRCT), 320 to 360 (AVDY…KTCS), 361 to 401 (KIDY…KTCR), 402 to 442 (RINY…KTCS), 443 to 483 (RVDH…KTCS), 484 to 524 (RADY…KTCA), 525 to 565 (KLDS…KTCR), 566 to 606 (RKDV…KRCR), and 607 to 647 (RKNV…KHCK). 30 disulfide bridges follow: Cys-242/Cys-253, Cys-249/Cys-262, Cys-264/Cys-277, Cys-283/Cys-294, Cys-290/Cys-303, Cys-305/Cys-318, Cys-324/Cys-335, Cys-331/Cys-344, Cys-346/Cys-359, Cys-365/Cys-376, Cys-372/Cys-385, Cys-387/Cys-400, Cys-406/Cys-417, Cys-413/Cys-426, Cys-428/Cys-441, Cys-447/Cys-458, Cys-454/Cys-467, Cys-469/Cys-482, Cys-488/Cys-499, Cys-495/Cys-508, Cys-510/Cys-523, Cys-529/Cys-540, Cys-536/Cys-549, Cys-551/Cys-564, Cys-570/Cys-581, Cys-577/Cys-590, Cys-592/Cys-605, Cys-611/Cys-622, Cys-618/Cys-631, and Cys-633/Cys-646. Residues 655-830 (DLVFVIDGSK…STMGEISEKL (176 aa)) form the VWFA 2 domain. N-linked (GlcNAc...) asparagine glycosylation is present at Asn-890. A coiled-coil region spans residues 917–955 (KCENLILFQNVANEEVRKLTQRLEEMTQRMEALENRLKY).

In terms of tissue distribution, detected in a variety of organs, including calvaria, uterus, heart and brain, as well as fibroblast and osteoblast cell lines.

The protein resides in the secreted. Functionally, involved in matrix assembly. The polypeptide is Matrilin-2 (Matn2) (Mus musculus (Mouse)).